The primary structure comprises 426 residues: MKQLDVNEYMALVGRQARTASRGMARAGTAQKNRALLHIAAAVRRDAAKLKEINARDVERARANGQDAAFIDRLTLTDRAIDTMAAGLEQIAALPDPIGEISNMKFRPTGIQVGQMRVPLGVIGIIYESRPNVTVDAAALCIKSGNATILRGGSEAIESNGALAALIEEGLADAGLPANAVQVVATTDRAAVGKLITMTEYVDVIVPRGGKSLIARLIEEARVPMIKHLDGICHVYIDADADIEKAVRVCDNAKTQRYAPCNTMETLLVSRDVAARALPPLARIYQDKGVELRVCPGTRATLEAAGFGNLKDAVEADWHTEYLAPILSIRTVDGLDAAIEHINTYGSAHTDSIITENYSTGMRFLREVDSASVMINASTRFADGFEYGLGAEIGISNDKLHARGPVGLEGLTSLKYVVFGHGEIRT.

This sequence belongs to the gamma-glutamyl phosphate reductase family.

It is found in the cytoplasm. It catalyses the reaction L-glutamate 5-semialdehyde + phosphate + NADP(+) = L-glutamyl 5-phosphate + NADPH + H(+). Its pathway is amino-acid biosynthesis; L-proline biosynthesis; L-glutamate 5-semialdehyde from L-glutamate: step 2/2. Catalyzes the NADPH-dependent reduction of L-glutamate 5-phosphate into L-glutamate 5-semialdehyde and phosphate. The product spontaneously undergoes cyclization to form 1-pyrroline-5-carboxylate. This chain is Gamma-glutamyl phosphate reductase, found in Ralstonia pickettii (strain 12J).